We begin with the raw amino-acid sequence, 101 residues long: CLAVATA3/ESR (CLE)-related protein 18 (101 aa).

Residues 1-25 form the signal peptide; the sequence is MHLLKGGVVLIITLILFLITSSIVA. Residues 37–58 form a disordered region; the sequence is RQIPTGPDPLHNPPQPSPKHHH. P40 and P43 each carry hydroxyproline. Residues 42–53 are compositionally biased toward pro residues; sequence GPDPLHNPPQPS. Residue P43 is glycosylated (O-linked (Ara...) hydroxyproline). A Sulfotyrosine modification is found at Y76. P84 is modified (hydroxyproline).

The protein belongs to the CLV3/ESR signal peptide family. In terms of processing, the tyrosine sulfation is critical for the function of the peptide. Post-translationally, the O-glycosylation (arabinosylation) of the hydroxyproline Pro-43 enhances binding affinity of the CLE18p peptide for its receptor. In terms of tissue distribution, expressed in roots, leaves, siliques and seedlings.

It is found in the secreted. Its subcellular location is the extracellular space. Functionally, root growth factor that regulates the pattern of root growth and lateral root development by modulating the length and the number of cortical cells in the root apical meristem (RAM), and the anticlinal asymmetric cell divisions in lateral root initiation cells. Extracellular signal peptide that regulates cell fate. Represses root apical meristem maintenance. Root growth factor that regulates the pattern of root growth and lateral root development. Regulates the transition of protophloem cells from proliferation to differentiation, thus impinging on postembryonic growth capacity of the root meristem; this signaling pathway requires CRN and CLV2. This is CLAVATA3/ESR (CLE)-related protein 18 from Arabidopsis thaliana (Mouse-ear cress).